Here is a 196-residue protein sequence, read N- to C-terminus: Small ribosomal subunit protein uS4c (196 aa).

Residues 89–157 (MRLDNILFRL…VQNYIASSDP (69 aa)) enclose the S4 RNA-binding domain.

This sequence belongs to the universal ribosomal protein uS4 family. Part of the 30S ribosomal subunit. Contacts protein S5. The interaction surface between S4 and S5 is involved in control of translational fidelity.

Its subcellular location is the plastid. It localises to the chloroplast. One of the primary rRNA binding proteins, it binds directly to 16S rRNA where it nucleates assembly of the body of the 30S subunit. Its function is as follows. With S5 and S12 plays an important role in translational accuracy. This chain is Small ribosomal subunit protein uS4c (rps4), found in Elymus canadensis (Canada wild rye).